A 225-amino-acid chain; its full sequence is Ribosomal RNA small subunit methyltransferase G (225 aa).

S-adenosyl-L-methionine contacts are provided by residues Gly-71, Leu-76, 121-122, and Arg-139; that span reads AE. The disordered stretch occupies residues 204 to 225; it reads VVEARRATPSNGRGRPGRSSRR.

This sequence belongs to the methyltransferase superfamily. RNA methyltransferase RsmG family.

It is found in the cytoplasm. Functionally, specifically methylates the N7 position of guanine in position 518 of 16S rRNA. This is Ribosomal RNA small subunit methyltransferase G from Mycobacterium sp. (strain JLS).